The sequence spans 266 residues: Putative [LysW]-aminoadipate/[LysW]-glutamate kinase (266 aa).

Residues 36 to 37 (GG), R63, and N168 each bind substrate.

Belongs to the acetylglutamate kinase family. LysZ subfamily.

Its subcellular location is the cytoplasm. It carries out the reaction [amino-group carrier protein]-C-terminal-N-(1,4-dicarboxybutan-1-yl)-L-glutamine + ATP = [amino-group carrier protein]-C-terminal-N-(1-carboxy-5-phosphooxy-5-oxopentan-1-yl)-L-glutamine + ADP. It catalyses the reaction [amino-group carrier protein]-C-terminal-gamma-(L-glutamyl)-L-glutamate + ATP = [amino-group carrier protein]-C-terminal-gamma-(5-phospho-L-glutamyl)-L-glutamate + ADP. It functions in the pathway amino-acid biosynthesis; L-lysine biosynthesis via AAA pathway; L-lysine from L-alpha-aminoadipate (Thermus route): step 2/5. Its pathway is amino-acid biosynthesis; L-arginine biosynthesis. Functionally, involved in both the arginine and lysine biosynthetic pathways. Phosphorylates the LysW-bound precursors glutamate (for arginine biosynthesis), respectively alpha-aminoadipate (for lysine biosynthesis). The protein is Putative [LysW]-aminoadipate/[LysW]-glutamate kinase of Cenarchaeum symbiosum (strain A).